The primary structure comprises 129 residues: uncharacterized protein (129 aa).

It belongs to the asfivirus C129R family.

It is found in the virion. In terms of biological role, plays a role in the inhibition of type I interferon signaling pathway. Mechanistically, specifically interacts with 2',3'-cGAMP and cleaves it via its phosphodiesterase activity. In turn, prevents 2',3'-cGAMP interaction with host ER-resident STING1 leading to inhibition of downstream signaling pathway and type I interferon production. This is an uncharacterized protein from African swine fever virus (isolate Pig/Kenya/KEN-50/1950) (ASFV).